The primary structure comprises 252 residues: Triosephosphate isomerase (252 aa).

9–11 (NWK) contributes to the substrate binding site. Residue His-95 is the Electrophile of the active site. The active-site Proton acceptor is the Glu-167. Substrate is bound by residues Gly-173, Ser-213, and 234 to 235 (GG).

This sequence belongs to the triosephosphate isomerase family. In terms of assembly, homodimer.

It localises to the cytoplasm. It catalyses the reaction D-glyceraldehyde 3-phosphate = dihydroxyacetone phosphate. Its pathway is carbohydrate biosynthesis; gluconeogenesis. It participates in carbohydrate degradation; glycolysis; D-glyceraldehyde 3-phosphate from glycerone phosphate: step 1/1. Functionally, involved in the gluconeogenesis. Catalyzes stereospecifically the conversion of dihydroxyacetone phosphate (DHAP) to D-glyceraldehyde-3-phosphate (G3P). The protein is Triosephosphate isomerase of Syntrophotalea carbinolica (strain DSM 2380 / NBRC 103641 / GraBd1) (Pelobacter carbinolicus).